A 284-amino-acid polypeptide reads, in one-letter code: Acetyl-coenzyme A carboxylase carboxyl transferase subunit beta (284 aa).

Residues 25 to 284 (LWTKCPKCES…ICRMLLQKSA (260 aa)) enclose the CoA carboxyltransferase N-terminal domain. Zn(2+) contacts are provided by C29, C32, C48, and C51. A C4-type zinc finger spans residues 29–51 (CPKCESTLYRAEVRRNLEVCPKC).

The protein belongs to the AccD/PCCB family. As to quaternary structure, acetyl-CoA carboxylase is a heterohexamer composed of biotin carboxyl carrier protein (AccB), biotin carboxylase (AccC) and two subunits each of ACCase subunit alpha (AccA) and ACCase subunit beta (AccD). Requires Zn(2+) as cofactor.

The protein resides in the cytoplasm. The catalysed reaction is N(6)-carboxybiotinyl-L-lysyl-[protein] + acetyl-CoA = N(6)-biotinyl-L-lysyl-[protein] + malonyl-CoA. It functions in the pathway lipid metabolism; malonyl-CoA biosynthesis; malonyl-CoA from acetyl-CoA: step 1/1. In terms of biological role, component of the acetyl coenzyme A carboxylase (ACC) complex. Biotin carboxylase (BC) catalyzes the carboxylation of biotin on its carrier protein (BCCP) and then the CO(2) group is transferred by the transcarboxylase to acetyl-CoA to form malonyl-CoA. The sequence is that of Acetyl-coenzyme A carboxylase carboxyl transferase subunit beta from Hydrogenovibrio crunogenus (strain DSM 25203 / XCL-2) (Thiomicrospira crunogena).